A 355-amino-acid polypeptide reads, in one-letter code: Protein RecA (355 aa).

78–85 lines the ATP pocket; it reads GPESSGKT.

This sequence belongs to the RecA family.

It is found in the cytoplasm. Can catalyze the hydrolysis of ATP in the presence of single-stranded DNA, the ATP-dependent uptake of single-stranded DNA by duplex DNA, and the ATP-dependent hybridization of homologous single-stranded DNAs. It interacts with LexA causing its activation and leading to its autocatalytic cleavage. The chain is Protein RecA from Rhodobacter capsulatus (Rhodopseudomonas capsulata).